The primary structure comprises 281 residues: sn-glycerol-3-phosphate transport system permease protein UgpE (281 aa).

Helical transmembrane passes span 16–36 (LILG…AATL), 85–105 (FSIT…IVWF), 113–133 (FFWM…FPTV), 142–162 (LDSY…TFLF), 202–222 (ALFV…LLII), and 247–267 (WNSV…IVLV). The 192-residue stretch at 77-268 (LLNSFVMAFS…IPPVVIVLVM (192 aa)) folds into the ABC transmembrane type-1 domain.

Belongs to the binding-protein-dependent transport system permease family. UgpAE subfamily. The complex is composed of two ATP-binding proteins (UgpC), two transmembrane proteins (UgpA and UgpE) and a solute-binding protein (UgpB).

The protein resides in the cell inner membrane. Part of the ABC transporter complex UgpBAEC involved in sn-glycerol-3-phosphate (G3P) import. Probably responsible for the translocation of the substrate across the membrane. The chain is sn-glycerol-3-phosphate transport system permease protein UgpE (ugpE) from Shigella dysenteriae serotype 1 (strain Sd197).